The following is a 912-amino-acid chain: Non-lysosomal glucosylceramidase (912 aa).

The segment at 886–912 (HKKNSSRPAVTQGTAPSQPECGPKRSL) is disordered. A compositionally biased stretch (polar residues) spans 891 to 902 (SRPAVTQGTAPS).

The protein belongs to the non-lysosomal glucosylceramidase family.

The protein resides in the endoplasmic reticulum membrane. The protein localises to the golgi apparatus membrane. The catalysed reaction is a beta-D-glucosyl-(1&lt;-&gt;1')-N-acylsphing-4-enine + H2O = an N-acylsphing-4-enine + D-glucose. It catalyses the reaction a beta-D-galactosyl-(1&lt;-&gt;1')-N-acylsphing-4-enine + H2O = an N-acylsphing-4-enine + D-galactose. It carries out the reaction beta-D-glucosyl-(1-&gt;3)-O-lithocholate + H2O = lithocholate + D-glucose. The enzyme catalyses beta-D-glucosyl-(1-&gt;3)-O-chenodeoxycholate + H2O = chenodeoxycholate + D-glucose. The catalysed reaction is a di-trans,poly-cis-dolichyl beta-D-glucosyl phosphate + chenodeoxycholate = beta-D-glucosyl-(1-&gt;3)-O-chenodeoxycholate + a di-trans,poly-cis-dolichyl phosphate + H(+). It catalyses the reaction octyl beta-D-glucose + chenodeoxycholate = beta-D-glucosyl-(1-&gt;3)-O-chenodeoxycholate + octan-1-ol. It carries out the reaction cholesteryl 3-beta-D-glucoside + H2O = cholesterol + D-glucose. The enzyme catalyses a beta-D-glucosyl-(1&lt;-&gt;1')-N-acylsphing-4-enine + cholesterol = cholesteryl 3-beta-D-glucoside + an N-acylsphing-4-enine. The catalysed reaction is beta-D-glucosyl-N-(9Z-octadecenoyl)-sphing-4E-enine + cholesterol = N-(9Z-octadecenoyl)-sphing-4-enine + cholesteryl 3-beta-D-glucoside. It catalyses the reaction a beta-D-galactosyl-(1&lt;-&gt;1')-N-acylsphing-4-enine + cholesterol = cholesteryl 3-beta-D-galactoside + an N-acylsphing-4-enine. It carries out the reaction 1-(beta-D-galactosyl)-N-dodecanoylsphing-4-enine + cholesterol = cholesteryl 3-beta-D-galactoside + N-dodecanoylsphing-4-enine. The protein operates within lipid metabolism; sphingolipid metabolism. It participates in steroid metabolism; cholesterol metabolism. Enzymatic activity is dependent on membrane association and requires the presence of lipids. Its function is as follows. Non-lysosomal glucosylceramidase that catalyzes the hydrolysis of glucosylceramides/GlcCers (such as beta-D-glucosyl-(1&lt;-&gt;1')-N-acylsphing-4-enine) to free glucose and ceramides (such as N-acylsphing-4-enine). GlcCers are membrane glycosphingolipids that have a wide intracellular distribution. They are the main precursors of more complex glycosphingolipids that play a role in cellular growth, differentiation, adhesion, signaling, cytoskeletal dynamics and membrane properties. Involved in the transglucosylation of cholesterol, transfers glucose from GlcCer to cholesterol, thereby modifying its water solubility and biological properties. Under specific conditions, may catalyze the reverse reaction, transferring glucose from cholesteryl-3-beta-D-glucoside to ceramide (such as N-acylsphing-4-enine). May play a role in the metabolism of bile acids. Able to hydrolyze bile acid 3-O-glucosides as well as to produce bile acid-glucose conjugates thanks to a bile acid glucosyl transferase activity. Catalyzes the hydrolysis of galactosylceramides/GalCers (such as beta-D-galactosyl-(1&lt;-&gt;1')-N-acylsphing-4-enine), as well as the galactosyl transfer between GalCers and cholesterol in vitro with lower activity compared with their activity against GlcCers. The protein is Non-lysosomal glucosylceramidase of Rattus norvegicus (Rat).